The sequence spans 553 residues: Zinc finger protein 426 (553 aa).

The KRAB domain maps to 40 to 111 (VSFDDVIVDF…KIVFPEWKIQ (72 aa)). 11 C2H2-type zinc fingers span residues 222-244 (FECS…QRTH), 277-299 (HRCK…MRTH), 305-327 (YECK…GRTH), 333-355 (YVCN…VRSH), 361-383 (YACK…IRTH), 389-411 (FVCV…LKMH), 417-439 (CECK…MRTH), 445-467 (YTCK…MRIH), 473-495 (YECK…ERTH), 501-525 (YECK…SHTH), and 531-553 (YKCQ…ERIH).

It is found in the nucleus. Its function is as follows. May be involved in transcriptional regulation. This is Zinc finger protein 426 (Znf426) from Rattus norvegicus (Rat).